The primary structure comprises 470 residues: Argininosuccinate synthase (470 aa).

ATP is bound by residues 17 to 25 (AFSGGLDTS) and A43. L-citrulline is bound at residue Y99. ATP is bound by residues G129 and T131. L-aspartate-binding residues include T131, N135, and D136. N135 is an L-citrulline binding site. ATP is bound at residue D136. Positions 139 and 192 each coordinate L-citrulline. Residue D194 coordinates ATP. Residues T201, E203, and E280 each contribute to the L-citrulline site. The segment at 448–470 (IASRGESSGDELLDRAAMESGTD) is disordered.

It belongs to the argininosuccinate synthase family. Type 2 subfamily. As to quaternary structure, homotetramer.

The protein resides in the cytoplasm. It catalyses the reaction L-citrulline + L-aspartate + ATP = 2-(N(omega)-L-arginino)succinate + AMP + diphosphate + H(+). Its pathway is amino-acid biosynthesis; L-arginine biosynthesis; L-arginine from L-ornithine and carbamoyl phosphate: step 2/3. The chain is Argininosuccinate synthase from Kineococcus radiotolerans (strain ATCC BAA-149 / DSM 14245 / SRS30216).